The primary structure comprises 133 residues: Small ribosomal subunit protein uS8 (133 aa).

This sequence belongs to the universal ribosomal protein uS8 family. Part of the 30S ribosomal subunit. Contacts proteins S5 and S12.

One of the primary rRNA binding proteins, it binds directly to 16S rRNA central domain where it helps coordinate assembly of the platform of the 30S subunit. The polypeptide is Small ribosomal subunit protein uS8 (Gloeobacter violaceus (strain ATCC 29082 / PCC 7421)).